A 232-amino-acid chain; its full sequence is Fibrillarin-like rRNA/tRNA 2'-O-methyltransferase (232 aa).

Residues 89-90 (TT), 108-109 (EF), 133-134 (DA), and 153-156 (DIAQ) each bind S-adenosyl-L-methionine.

It belongs to the methyltransferase superfamily. Fibrillarin family. Interacts with nop5. Component of box C/D small ribonucleoprotein (sRNP) particles that contain rpl7ae, FlpA and nop5, plus a guide RNA.

Functionally, involved in pre-rRNA and tRNA processing. Utilizes the methyl donor S-adenosyl-L-methionine to catalyze the site-specific 2'-hydroxyl methylation of ribose moieties in rRNA and tRNA. Site specificity is provided by a guide RNA that base pairs with the substrate. Methylation occurs at a characteristic distance from the sequence involved in base pairing with the guide RNA. The sequence is that of Fibrillarin-like rRNA/tRNA 2'-O-methyltransferase from Saccharolobus islandicus (strain L.S.2.15 / Lassen #1) (Sulfolobus islandicus).